The chain runs to 244 residues: rRNA adenine N-6-methyltransferase (244 aa).

S-adenosyl-L-methionine contacts are provided by N11, I13, G38, E59, D84, and N101.

The protein belongs to the class I-like SAM-binding methyltransferase superfamily. rRNA adenine N(6)-methyltransferase family.

It catalyses the reaction adenosine(2085) in 23S rRNA + 2 S-adenosyl-L-methionine = N(6)-dimethyladenosine(2085) in 23S rRNA + 2 S-adenosyl-L-homocysteine + 2 H(+). In terms of biological role, this protein produces a dimethylation of the adenine residue at position 2085 in 23S rRNA, resulting in reduced affinity between ribosomes and macrolide-lincosamide-streptogramin B antibiotics. In Staphylococcus aureus, this protein is rRNA adenine N-6-methyltransferase (ermC).